Here is a 203-residue protein sequence, read N- to C-terminus: Protein shisa-like-1a (203 aa).

A signal peptide spans 1-25 (MIMNGRWSFNTLAIIFILLSTAALS). The Extracellular segment spans residues 26–97 (AHFRVCEPYS…SDSFAHNNYT (72 aa)). Residues asparagine 53, asparagine 63, asparagine 72, asparagine 83, and asparagine 95 are each glycosylated (N-linked (GlcNAc...) asparagine). A helical membrane pass occupies residues 98–118 (ALIGVWIYGFFVMVLLALDFL). The Cytoplasmic segment spans residues 119 to 203 (YYSAMNYELC…LLSFQTSTAW (85 aa)). The tract at residues 157 to 191 (ELNTGPGLSQQQQLHLHHHHHHHHPRHSLRGDTQS) is disordered. Low complexity predominate over residues 161 to 170 (GPGLSQQQQL). A compositionally biased stretch (basic residues) spans 171–184 (HLHHHHHHHHPRHS).

Belongs to the shisa family.

Its subcellular location is the membrane. This Danio rerio (Zebrafish) protein is Protein shisa-like-1a (shisal1a).